The sequence spans 104 residues: Small ribosomal subunit protein uS10 (104 aa).

The protein belongs to the universal ribosomal protein uS10 family. In terms of assembly, part of the 30S ribosomal subunit.

Its function is as follows. Involved in the binding of tRNA to the ribosomes. This is Small ribosomal subunit protein uS10 from Nitrosococcus oceani (strain ATCC 19707 / BCRC 17464 / JCM 30415 / NCIMB 11848 / C-107).